The chain runs to 246 residues: Small ribosomal subunit protein uS2 (246 aa).

Belongs to the universal ribosomal protein uS2 family.

The sequence is that of Small ribosomal subunit protein uS2 from Burkholderia pseudomallei (strain 668).